The following is a 394-amino-acid chain: Ceramide glucosyltransferase (394 aa).

Residues Met-1 to Gly-10 are Lumenal-facing. Residues Met-11–Tyr-32 traverse the membrane as a helical segment. The Cytoplasmic portion of the chain corresponds to Thr-33–Arg-195. Position 92 (Asp-92) is a short sequence motif, D1. N6-acetyllysine is present on Lys-117. Residue Asp-144 is a short sequence motif, D2. A helical membrane pass occupies residues Ser-196–Met-215. The Lumenal segment spans residues Arg-216 to Thr-287. Position 236 (Asp-236) is a short sequence motif, D3. The Proton acceptor role is filled by Asp-236. The (Q/R)XXRW signature appears at Arg-272–Trp-276. A helical membrane pass occupies residues Ile-288–Gly-304. Over Trp-305–His-309 the chain is Cytoplasmic. Residues Val-310–Ile-328 traverse the membrane as a helical segment. Over Phe-329 to Asp-348 the chain is Lumenal. Residues Tyr-349–Trp-369 traverse the membrane as a helical segment. Residues Asp-370–Val-394 are Cytoplasmic-facing.

Belongs to the glycosyltransferase 2 family. Interacts with RTN1; regulates the ceramide glucosyltransferase activity of UGCG.

Its subcellular location is the golgi apparatus membrane. The enzyme catalyses an N-acylsphing-4-enine + UDP-alpha-D-glucose = a beta-D-glucosyl-(1&lt;-&gt;1')-N-acylsphing-4-enine + UDP + H(+). The catalysed reaction is UDP-alpha-D-xylose + an N-acylsphing-4-enine = a beta-D-xylosyl-(1&lt;-&gt;1')-N-acylsphing-4-enine + UDP + H(+). It carries out the reaction N-(9Z-octadecenoyl)-sphing-4-enine + UDP-alpha-D-xylose = beta-D-xylosyl-(1&lt;-&gt;1')-N-(9Z-octadecenoyl)-sphing-4-enine + UDP + H(+). It participates in lipid metabolism; sphingolipid metabolism. In terms of biological role, participates in the initial step of the glucosylceramide-based glycosphingolipid/GSL synthetic pathway at the cytosolic surface of the Golgi. Catalyzes the transfer of glucose from UDP-glucose to ceramide to produce glucosylceramide/GlcCer (such as beta-D-glucosyl-(1&lt;-&gt;1')-N-acylsphing-4-enine). Glucosylceramide is the core component of glycosphingolipids/GSLs, amphipathic molecules consisting of a ceramide lipid moiety embedded in the outer leaflet of the membrane, linked to one of hundreds of different externally oriented oligosaccharide structures. Glycosphingolipids are essential components of membrane microdomains that mediate membrane trafficking and signal transduction. They are implicated in many fundamental cellular processes, including growth, differentiation, migration, morphogenesis, cell-to-cell and cell-to-matrix interactions. They are required for instance in the proper development and functioning of the nervous system. As an example of their role in signal transduction, they regulate the leptin receptor/LEPR in the leptin-mediated signaling pathway. They also play an important role in the establishment of the skin barrier regulating keratinocyte differentiation and the proper assembly of the cornified envelope. The biosynthesis of GSLs is also required for the proper intestinal endocytic uptake of nutritional lipids. Catalyzes the synthesis of xylosylceramide/XylCer (such as beta-D-xylosyl-(1&lt;-&gt;1')-N-acylsphing-4-enine) using UDP-Xyl as xylose donor. The sequence is that of Ceramide glucosyltransferase from Mus musculus (Mouse).